The following is a 282-amino-acid chain: Probable phosphatase C1620.13 (282 aa).

The Tele-phosphohistidine intermediate role is filled by His61. The Proton donor/acceptor role is filled by Glu135.

This sequence belongs to the phosphoglycerate mutase family. BPG-dependent PGAM subfamily.

It localises to the nucleus. This is Probable phosphatase C1620.13 from Schizosaccharomyces pombe (strain 972 / ATCC 24843) (Fission yeast).